A 235-amino-acid chain; its full sequence is Thiamine import ATP-binding protein ThiQ (235 aa).

One can recognise an ABC transporter domain in the interval 2–230; the sequence is LKLIDITWLY…QASASALLGI (229 aa). 32–39 serves as a coordination point for ATP; the sequence is GPSGAGKS.

It belongs to the ABC transporter superfamily. Thiamine importer (TC 3.A.1.19.1) family. In terms of assembly, the complex is composed of two ATP-binding proteins (ThiQ), two transmembrane proteins (ThiP) and a solute-binding protein (ThiB).

The protein resides in the cell inner membrane. It catalyses the reaction thiamine(out) + ATP + H2O = thiamine(in) + ADP + phosphate + H(+). Functionally, part of the ABC transporter complex ThiBPQ involved in thiamine import. Responsible for energy coupling to the transport system. The protein is Thiamine import ATP-binding protein ThiQ of Salmonella paratyphi A (strain ATCC 9150 / SARB42).